The chain runs to 523 residues: Synaptotagmin-10 (523 aa).

Residues 1–55 (MSFHKEDGVNSLCQKALHIVTELCFAGQVEWEKCSGIFPRDRGSQGGSSTDISVS) lie on the Vesicular side of the membrane. Residues 13 to 35 (CQKALHIVTELCFAGQVEWEKCS) are cysteine motif. The helical transmembrane segment at 56–76 (LLAVVVSFCGLALLVVSLFVF) threads the bilayer. At 77–523 (WKLCWPCWKS…CPSPKPPSTP (447 aa)) the chain is on the cytoplasmic side. Threonine 136 is modified (phosphothreonine). C2 domains are found at residues 231-352 (ICGK…TVWK) and 363-496 (DLGE…THWH). Residues aspartate 262, aspartate 268, aspartate 320, phenylalanine 321, aspartate 322, serine 325, aspartate 328, aspartate 394, aspartate 400, aspartate 454, and aspartate 456 each contribute to the Ca(2+) site.

It belongs to the synaptotagmin family. As to quaternary structure, homodimer; disulfide-linked via the cysteine motif. Can also form heterodimers with SYT3, SYT6, SYT7 and SYT9. It depends on Ca(2+) as a cofactor. Expressed only in pancreas, lung and kidney.

The protein localises to the cytoplasmic vesicle. Its subcellular location is the secretory vesicle membrane. Its function is as follows. Ca(2+) sensor specifically required for the Ca(2+)-dependent exocytosis of secretory vesicles containing IGF1 in neurons of the olfactory bulb. Exocytosis of IGF1 is required for sensory perception of smell. Not involved in Ca(2+)-dependent synaptic vesicle exocytosis. Acts through Ca(2+) and phospholipid binding to the C2 domain: Ca(2+) induces binding of the C2-domains to phospholipid membranes and to assembled SNARE-complexes; both actions contribute to triggering exocytosis. This chain is Synaptotagmin-10 (SYT10), found in Homo sapiens (Human).